The chain runs to 178 residues: Small ribosomal subunit protein bS16 (178 aa).

Residues 78–178 (KLGITQWTAG…AAPAEGEEQA (101 aa)) form a disordered region. Residues 91 to 113 (KKGEPGQKAKERAEERAQREADR) show a composition bias toward basic and acidic residues. Low complexity predominate over residues 114-127 (AAAAAEAAAAPAEE). Over residues 128 to 139 (APAEEAPAEEAA) the composition is skewed to acidic residues. Residues 140-172 (AEAAPEAAAAEEAPAAEAAAEEAAPAAEEAAPA) show a composition bias toward low complexity.

Belongs to the bacterial ribosomal protein bS16 family.

This chain is Small ribosomal subunit protein bS16, found in Phenylobacterium zucineum (strain HLK1).